Here is a 176-residue protein sequence, read N- to C-terminus: MQGSIDSHIEGIVQNILEDSVGTKGEGVYLVAMTVKGSAVHRKIEVILDADSGVRIDQCSFFARRIRERLEEDEALSGTMGEDFDLVVGSPGLGEPLVLRRQYGRHVGRLLRVWYRDTEGVEHEVAGHLQAVSLTEGGGSITLKPQTAKKKGRQEETEDMTLELDAVSRAVPEAEI.

Residues 143 to 176 (LKPQTAKKKGRQEETEDMTLELDAVSRAVPEAEI) form a disordered region.

Belongs to the RimP family.

It localises to the cytoplasm. Functionally, required for maturation of 30S ribosomal subunits. The polypeptide is Ribosome maturation factor RimP (Chlorobium luteolum (strain DSM 273 / BCRC 81028 / 2530) (Pelodictyon luteolum)).